The primary structure comprises 185 residues: Coiled-coil domain-containing protein 32 (185 aa).

Residues 78 to 98 (LASLEKKLRRIKGLNQEVTSK) are a coiled coil. The segment at 159-185 (IPPESQVEKPVAEDEPAAGDKPAAAEQ) is disordered.

Interacts with AP2S1; the interaction is direct and mediates association with adaptor protein complex 2 (AP-2).

Its subcellular location is the membrane. The protein resides in the coated pit. In terms of biological role, regulates clathrin-mediated endocytsois of cargos such as transferrin probably through the association and modulation of adaptor protein complex 2 (AP-2). Has a role in ciliogenesis. Required for proper cephalic and left/right axis development. This chain is Coiled-coil domain-containing protein 32, found in Homo sapiens (Human).